A 2647-amino-acid chain; its full sequence is Filamin-A (2647 aa).

The interval 1 to 37 (MSSSHSRCGQSAAVASPGGSIDSRDAEMPATEKDLAE) is disordered. Ser-2 carries the post-translational modification N-acetylserine. Positions 2-274 (SSSHSRCGQS…PKAKLKPGAP (273 aa)) are actin-binding. A phosphoserine mark is found at Ser-11, Ser-16, and Ser-20. The span at 22 to 37 (DSRDAEMPATEKDLAE) shows a compositional bias: basic and acidic residues. Glycyl lysine isopeptide (Lys-Gly) (interchain with G-Cter in ubiquitin) cross-links involve residues Lys-42, Lys-43, and Lys-135. Calponin-homology (CH) domains follow at residues 43-149 (KIQQ…LHYS) and 166-269 (QTPK…KAKL). A disordered region spans residues 271-294 (PGAPLRPKLNPKKARAYGPGIEPT). Filamin repeat units follow at residues 276-374 (RPKL…EVYV), 376-474 (KSQG…TVTV), 475-570 (GQAC…EVKV), 571-663 (GTEC…MADI), 667-763 (PQDF…RVNV), 764-866 (GAGS…RVKV), 867-965 (EPSH…SVGV), 966-1061 (SPSL…PLEA), 1062-1154 (VAPT…KAHV), 1155-1249 (APCF…KLQV), 1250-1349 (EPAV…QVPV), 1350-1442 (TEGC…KVPV), 1443-1539 (HDVT…KVKV), 1540-1636 (LPTH…RVRA), and 1641-1740 (DASK…QVTA). Lys-299 participates in a covalent cross-link: Glycyl lysine isopeptide (Lys-Gly) (interchain with G-Cter in SUMO1); alternate. Lys-299 participates in a covalent cross-link: Glycyl lysine isopeptide (Lys-Gly) (interchain with G-Cter in SUMO2); alternate. N6-acetyllysine is present on residues Lys-376 and Lys-508. N6-acetyllysine occurs at positions 700, 781, 837, 865, and 906. 2 positions are modified to phosphoserine: Ser-968 and Ser-1055. Lys-1071 bears the N6-acetyllysine; alternate mark. At Lys-1071 the chain carries N6-succinyllysine; alternate. Ser-1084 carries the phosphoserine modification. At Thr-1089 the chain carries Phosphothreonine. A phosphoserine mark is found at Ser-1301 and Ser-1338. Lys-1372 carries the post-translational modification N6-acetyllysine. Phosphoserine occurs at positions 1459 and 1533. Residues 1490-1607 (PKGLVEPVDV…DNHDGTYTVA (118 aa)) form an interaction with furin region. Residue Lys-1538 is modified to N6-acetyllysine. 2 positions are modified to phosphoserine: Ser-1630 and Ser-1734. Residues 1741 to 1778 (LAGDQPTVQTPLRSQQLAPQYNYPQGSQQTWIPERPMV) form a hinge 1 region. Thr-1750 bears the Phosphothreonine mark. Filamin repeat units lie at residues 1765-1860 (QGSQ…QFYV), 1861-1952 (DYVN…TARV), 1953-2039 (TGDD…PVVI), 2042-2134 (SEIG…SVKV), 2135-2230 (TGEG…QFTV), 2233-2325 (LGEG…VVPV), 2327-2420 (SPSG…KIRV), and 2424-2516 (GHGG…KAKV). At Ser-1835 the chain carries Phosphoserine. Phosphoserine is present on residues Ser-1967, Ser-2053, Ser-2128, Ser-2152, Ser-2158, Ser-2163, Ser-2180, Ser-2284, Ser-2327, and Ser-2329. At Thr-2336 the chain carries Phosphothreonine. Residues Ser-2338, Ser-2370, Ser-2414, Ser-2510, Ser-2523, and Ser-2526 each carry the phosphoserine modification. The segment at 2517–2553 (TGPRLVSNHSLHETSSVFVDSLTKVATVPQHATSGPG) is hinge 2. The tract at residues 2517–2647 (TGPRLVSNHS…PGSPYRIMVP (131 aa)) is self-association site, tail. One copy of the Filamin 24 repeat lies at 2552–2646 (PGPADVSKVV…IPGSPYRIMV (95 aa)). The residue at position 2569 (Lys-2569) is an N6-acetyllysine; alternate. Lys-2569 carries the post-translational modification N6-succinyllysine; alternate. Lys-2575 carries the N6-acetyllysine modification. Phosphothreonine is present on Thr-2599. N6-acetyllysine is present on residues Lys-2607 and Lys-2621.

The protein belongs to the filamin family. In terms of assembly, homodimer. Interacts with FCGR1A, FLNB, FURIN, HSPB7, KCND2, INPPL1, MYOT, MYOZ1, PDLIM2, ARHGAP24, PSEN1, PSEN2 and ECSCR. Also interacts with various other binding partners in addition to filamentous actin. Interacts (via N-terminus) with TAF1B. Interacts (via N-terminus) with MIS18BP1 (via N-terminus). Interacts with TMEM67 (via C-terminus) and MKS1. Interacts (via actin-binding domain) with MICALL2 (via calponin-homology (CH) domain). Interacts with RFLNA and RFLNB. Interacts (via filamin repeat 5) with SYK; docks SYK to the plasma membrane. Interacts (via filamin repeats 19 and 21) with DRD3; increased PKA-mediated phosphorylation at Ser-2152. Interacts (via filamin repeat 21) with MAS1, AGTR1 and ADRA1D; increases PKA-mediated phosphorylation of FLNA at Ser-2152. Interacts (via filamin repeats 4, 9, 12, 17, 19, 21, and 23) with GP1BA (high affinity), ITGB7, ITGB2 and FBLIM1. Interacts with CEACAM1 (via cytoplasmic domain); inhibits cell migration and cell scattering by interfering with the interaction between FLNA and RALA. Interacts with FOXC1. Interacts (via calponin-homology (CH) domain 1 and filamin repeat 24) with CRMP1; the interaction alters FLNA ternary structure and thus promotes FLNA dissociation from F-actin. Interacts with DPYSL3/CRMP3 and DPYSL4/CRMP4. In terms of processing, phosphorylation at Ser-2152 is negatively regulated by the autoinhibited conformation of filamin repeats 19-21. Ligand binding induces a conformational switch triggering phosphorylation at Ser-2152 by PKA. Post-translationally, polyubiquitination in the CH1 domain by a SCF-like complex containing ASB2 leads to proteasomal degradation. Prior dissociation from actin may be required to expose the target lysines. Ubiquitinated in endothelial cells by RNF213 downstream of the non-canonical Wnt signaling pathway, leading to its degradation by the proteasome. Widely expressed. Highly expressed in Purkinje cells.

It localises to the cytoplasm. Its subcellular location is the cell cortex. The protein localises to the cytoskeleton. The protein resides in the perikaryon. It is found in the cell projection. It localises to the growth cone. Its subcellular location is the podosome. Actin binding protein that promotes orthogonal branching of actin filaments and links actin filaments to membrane glycoproteins. Anchors various transmembrane proteins to the actin cytoskeleton and serves as a scaffold for a wide range of cytoplasmic signaling proteins. Interaction with FLNB may allow neuroblast migration from the ventricular zone into the cortical plate. Tethers cell surface-localized furin, modulates its rate of internalization and directs its intracellular trafficking. Involved in ciliogenesis. Plays a role in cell-cell contacts and adherens junctions during the development of blood vessels, heart and brain organs. Plays a role in platelets morphology through interaction with SYK that regulates ITAM- and ITAM-like-containing receptor signaling, resulting in by platelet cytoskeleton organization maintenance. During the axon guidance process, required for growth cone collapse induced by SEMA3A-mediated stimulation of neurons. In Mus musculus (Mouse), this protein is Filamin-A (Flna).